Here is a 280-residue protein sequence, read N- to C-terminus: Golgi phosphoprotein 3-like (280 aa).

Positions 1-30 (MTTLTRRGRRADVGQENRVDSEDYIKDKDE) are disordered. Basic and acidic residues predominate over residues 10-30 (RADVGQENRVDSEDYIKDKDE). 4 residues coordinate a 1,2-diacyl-sn-glycero-3-phospho-(1D-myo-inositol 4-phosphate): tryptophan 62, arginine 71, arginine 152, and arginine 155. The tract at residues 171–182 (EKQNFLLFDMTT) is beta-hairpin required for oligomerization.

Belongs to the GOLPH3/VPS74 family. In terms of assembly, homooligomer.

The protein localises to the golgi apparatus. It localises to the golgi stack membrane. It is found in the trans-Golgi network membrane. Its function is as follows. Phosphatidylinositol-4-phosphate-binding protein that may play a role in the process of vesicle budding at the Golgi and anterograde transport to the plasma membrane. In Xenopus tropicalis (Western clawed frog), this protein is Golgi phosphoprotein 3-like (golph3l).